Here is a 419-residue protein sequence, read N- to C-terminus: Synaptosomal-associated protein 47 (419 aa).

T-SNARE coiled-coil homology domains lie at 109-171 and 356-418; these read AANP…LTEL and KDWP…MRKL.

Belongs to the SVAP1 family. As to quaternary structure, associates with the BLOC-1 complex. Interacts with BLOC1S6. Forms a complex containing SNAP47, VAMP2 and STX1A.

The protein localises to the endomembrane system. The protein resides in the cytoplasm. It localises to the perinuclear region. May play a role in intracellular membrane fusion. This chain is Synaptosomal-associated protein 47 (Snap47), found in Rattus norvegicus (Rat).